The following is a 127-amino-acid chain: Aspartate 1-decarboxylase (127 aa).

The active-site Schiff-base intermediate with substrate; via pyruvic acid is S25. At S25 the chain carries Pyruvic acid (Ser). T57 lines the substrate pocket. Y58 functions as the Proton donor in the catalytic mechanism. 73–75 (GAA) is a binding site for substrate.

It belongs to the PanD family. Heterooctamer of four alpha and four beta subunits. Pyruvate is required as a cofactor. In terms of processing, is synthesized initially as an inactive proenzyme, which is activated by self-cleavage at a specific serine bond to produce a beta-subunit with a hydroxyl group at its C-terminus and an alpha-subunit with a pyruvoyl group at its N-terminus.

It localises to the cytoplasm. The enzyme catalyses L-aspartate + H(+) = beta-alanine + CO2. The protein operates within cofactor biosynthesis; (R)-pantothenate biosynthesis; beta-alanine from L-aspartate: step 1/1. Catalyzes the pyruvoyl-dependent decarboxylation of aspartate to produce beta-alanine. This chain is Aspartate 1-decarboxylase, found in Listeria monocytogenes serotype 4b (strain CLIP80459).